Here is a 465-residue protein sequence, read N- to C-terminus: uncharacterized protein (465 aa).

Disordered regions lie at residues 95–173 (STST…RKDP), 407–426 (QEME…KSDK), and 443–465 (ANPI…SSKK). The segment covering 118 to 137 (KTGSKKVTRSKKSKKTKRRS) has biased composition (basic residues). Over residues 138 to 150 (STTVTTTTISNSK) the composition is skewed to low complexity. The span at 153 to 173 (TPDKDKDSKDQRKQRTKRKDP) shows a compositional bias: basic and acidic residues. Positions 451-465 (MARRNRRSKGSSSKK) are enriched in basic residues.

This is an uncharacterized protein from Caenorhabditis elegans.